The following is a 514-amino-acid chain: Alpha-1,3/1,6-mannosyltransferase ALG2 (514 aa).

The N-linked (GlcNAc...) asparagine glycan is linked to N94. The next 2 membrane-spanning stretches (helical) occupy residues 443–463 (WAVM…HVFG) and 468–490 (YIYL…IFWV).

It belongs to the glycosyltransferase group 1 family.

The protein localises to the endoplasmic reticulum membrane. The enzyme catalyses a beta-D-Man-(1-&gt;4)-beta-D-GlcNAc-(1-&gt;4)-alpha-D-GlcNAc-diphospho-di-trans,poly-cis-dolichol + GDP-alpha-D-mannose = an alpha-D-Man-(1-&gt;3)-beta-D-Man-(1-&gt;4)-beta-D-GlcNAc-(1-&gt;4)-alpha-D-GlcNAc-diphospho-di-trans,poly-cis-dolichol + GDP + H(+). It catalyses the reaction an alpha-D-Man-(1-&gt;3)-beta-D-Man-(1-&gt;4)-beta-D-GlcNAc-(1-&gt;4)-alpha-D-GlcNAc-diphospho-di-trans,poly-cis-dolichol + GDP-alpha-D-mannose = an alpha-D-Man-(1-&gt;3)-[alpha-D-Man-(1-&gt;6)]-beta-D-Man-(1-&gt;4)-beta-D-GlcNAc-(1-&gt;4)-alpha-D-GlcNAc-diphospho-di-trans,poly-cis-dolichol + GDP + H(+). The protein operates within protein modification; protein glycosylation. Its function is as follows. Mannosylates Man(2)GlcNAc(2)-dolichol diphosphate and Man(1)GlcNAc(2)-dolichol diphosphate to form Man(3)GlcNAc(2)-dolichol diphosphate. In Eremothecium gossypii (strain ATCC 10895 / CBS 109.51 / FGSC 9923 / NRRL Y-1056) (Yeast), this protein is Alpha-1,3/1,6-mannosyltransferase ALG2 (ALG2).